The chain runs to 173 residues: Large ribosomal subunit protein uL10 (173 aa).

Belongs to the universal ribosomal protein uL10 family. Part of the ribosomal stalk of the 50S ribosomal subunit. The N-terminus interacts with L11 and the large rRNA to form the base of the stalk. The C-terminus forms an elongated spine to which L12 dimers bind in a sequential fashion forming a multimeric L10(L12)X complex.

Functionally, forms part of the ribosomal stalk, playing a central role in the interaction of the ribosome with GTP-bound translation factors. The chain is Large ribosomal subunit protein uL10 from Myxococcus xanthus (strain DK1622).